The chain runs to 84 residues: Small ribosomal subunit protein bS16 (84 aa).

Belongs to the bacterial ribosomal protein bS16 family.

The protein is Small ribosomal subunit protein bS16 of Thioalkalivibrio sulfidiphilus (strain HL-EbGR7).